Reading from the N-terminus, the 71-residue chain is Long neurotoxin 1 (71 aa).

5 cysteine pairs are disulfide-bonded: Cys3–Cys20, Cys14–Cys41, Cys26–Cys30, Cys45–Cys56, and Cys57–Cys62.

It belongs to the three-finger toxin family. Long-chain subfamily. Type II alpha-neurotoxin sub-subfamily. Expressed by the venom gland.

The protein localises to the secreted. In terms of biological role, binds with high affinity to muscular (alpha-1/CHRNA1) and neuronal (alpha-7/CHRNA7) nicotinic acetylcholine receptor (nAChR) and inhibits acetylcholine from binding to the receptor, thereby impairing neuromuscular and neuronal transmission. The sequence is that of Long neurotoxin 1 from Naja haje haje (Egyptian cobra).